We begin with the raw amino-acid sequence, 542 residues long: TOM1-like protein 7 (542 aa).

In terms of domain architecture, VHS spans 29 to 158 (ATSELLRTPD…ELKRCGVKFP (130 aa)). Serine 161 carries the post-translational modification Phosphoserine. Residues 201–289 (EIESLSLSSL…VLARHDAIAS (89 aa)) form the GAT domain. The tract at residues 303–340 (RETSSSLKTCGAAALESADSESSSSSSSSESETDEVED) is disordered. The span at 314–332 (AAALESADSESSSSSSSSE) shows a compositional bias: low complexity. Serine 521 carries the post-translational modification Phosphoserine. Residues 522 to 542 (FPARATGTSGAATAATVDRQP) are disordered. A compositionally biased stretch (low complexity) spans 524–542 (ARATGTSGAATAATVDRQP).

This sequence belongs to the TOM1 family. In terms of tissue distribution, preferentially expressed in flowers.

It localises to the membrane. In terms of biological role, might contribute to the loading of the ESCRT machinery. The chain is TOM1-like protein 7 from Arabidopsis thaliana (Mouse-ear cress).